The sequence spans 375 residues: Mitochondrial phosphate carrier protein 3, mitochondrial (375 aa).

The helical transmembrane segment at 76 to 96 threads the bilayer; it reads AFYAACTFGGILSCGLTHMTV. Solcar repeat units follow at residues 76–160, 173–257, and 274–353; these read AFYA…FKKT, YKTL…IVEM, and LQLG…FKVF. Residues 97 to 134 lie on the Mitochondrial matrix side of the membrane; sequence TPLDLVKCNMQIDPAKYKSISSGFGILLKEQGVKGFFR. Residues 135–154 traverse the membrane as a helical segment; that stretch reads GWVPTLLGYSAQGACKFGFY. Topologically, residues 155–175 are mitochondrial intermembrane; that stretch reads EYFKKTYSDLAGPEYTAKYKT. Residues 176–196 form a helical membrane-spanning segment; it reads LIYLAGSASAEIIADIALCPF. Residues 197 to 231 are Mitochondrial matrix-facing; the sequence is EAVKVRVQTQPGFARGMSDGFPKFIKSEGYGGLYK. Residues 232-251 form a helical membrane-spanning segment; sequence GLAPLWGRQIPYTMMKFASF. Topologically, residues 252–272 are mitochondrial intermembrane; the sequence is ETIVEMIYKYAIPNPKSECSK. Residues 273-293 traverse the membrane as a helical segment; it reads GLQLGVSFAGGYVAGVFCAIV. The Mitochondrial matrix portion of the chain corresponds to 294–332; the sequence is SHPADNLVSFLNNAKGATVGDAVKKIGMVGLFTRGLPLR. Residues 333–353 form a helical membrane-spanning segment; that stretch reads IVMIGTLTGAQWGLYDAFKVF. Residues 354–375 lie on the Mitochondrial intermembrane side of the membrane; sequence VGLPTTGGVAPAPAIAATEAKA.

Belongs to the mitochondrial carrier (TC 2.A.29) family. As to expression, expressed in stems, leaves and flowers. Strong expression in vascular tissues.

It localises to the mitochondrion inner membrane. Functionally, transport of phosphate groups from the cytosol to the mitochondrial matrix. Mediates salt stress tolerance through an ATP-dependent pathway and via modulation of the gibberellin metabolism. The protein is Mitochondrial phosphate carrier protein 3, mitochondrial (MPT3) of Arabidopsis thaliana (Mouse-ear cress).